Reading from the N-terminus, the 103-residue chain is Large ribosomal subunit protein bL21 (103 aa).

The protein belongs to the bacterial ribosomal protein bL21 family. In terms of assembly, part of the 50S ribosomal subunit. Contacts protein L20.

Functionally, this protein binds to 23S rRNA in the presence of protein L20. This is Large ribosomal subunit protein bL21 from Laribacter hongkongensis (strain HLHK9).